Consider the following 4151-residue polypeptide: Mycoketide-CoA synthase (4151 aa).

A coiled-coil region spans residues 2–32 (VDQLQHATEALRKALVQVERLKRTNRALLER). The Ketosynthase family 3 (KS3) 1 domain occupies 34–457 (SEPIAIVGMS…GTNAHVIIEA (424 aa)). Module stretches follow at residues 35–2038 (EPIA…RTEL) and 2057–4070 (DPIA…RREL). Residue C203 is the Acyl-thioester intermediate; for beta-ketoacyl synthase 1 activity of the active site. Active-site for beta-ketoacyl synthase 1 activity residues include H338 and H379. The tract at residues 559-880 (VFVFPGQGSQ…AASAFVAGVA (322 aa)) is acyltransferase 1. Residue S650 is the Acyl-ester intermediate; for acyltransferase 1 activity of the active site. Residues 926 to 1048 (HPLLGAVVDL…GILRPGSVEP (123 aa)) are N-terminal hotdog fold 1. The interval 926–1194 (HPLLGAVVDL…VARPVTERQL (269 aa)) is dehydratase 1. In terms of domain architecture, PKS/mFAS DH 1 spans 926–1195 (HPLLGAVVDL…ARPVTERQLL (270 aa)). H958 serves as the catalytic Proton acceptor; for dehydratase activity 1. The tract at residues 1060-1195 (AVTVDVADGY…ARPVTERQLL (136 aa)) is C-terminal hotdog fold 1. D1120 functions as the Proton donor; for dehydratase activity 1 in the catalytic mechanism. The tract at residues 1366 to 1671 (GTFENLRLEP…QARHTGKVVM (306 aa)) is enoyl reductase 1. The interval 1680–1858 (GTVLITGGTG…AISLGWGLWD (179 aa)) is beta-ketoacyl reductase 1. Residue Y1828 is the For beta-ketoacyl reductase 1 activity of the active site. Positions 1963–2038 (AVLLGLVRLH…RLASYIRTEL (76 aa)) constitute a Carrier 1 domain. S1998 is modified (O-(pantetheine 4'-phosphoryl)serine). One can recognise a Ketosynthase family 3 (KS3) 2 domain in the interval 2056-2480 (EDPIAIVGMA…GTNAHVIIEA (425 aa)). C2226 serves as the catalytic Acyl-thioester intermediate; for beta-ketoacyl synthase 2 activity. Catalysis depends on for beta-ketoacyl synthase 2 activity residues H2361 and H2402. An acyltransferase 2 region spans residues 2582 to 2893 (VFVFPGQGSQ…AVAQGFVTGM (312 aa)). Catalysis depends on S2672, which acts as the Acyl-ester intermediate; for acyltransferase 2 activity. The interval 2940-3062 (HALLGAVIDL…GALRAGSAEP (123 aa)) is N-terminal hotdog fold 2. The segment at 2940–3215 (HALLGAVIDL…ARPVTDQQLR (276 aa)) is dehydratase 2. Positions 2940–3215 (HALLGAVIDL…ARPVTDQQLR (276 aa)) constitute a PKS/mFAS DH 2 domain. H2972 (proton acceptor; for dehydratase activity 2) is an active-site residue. A C-terminal hotdog fold 2 region spans residues 3074–3215 (AVPVEVADGY…ARPVTDQQLR (142 aa)). The active-site Proton donor; for dehydratase activity 2 is the D3135. The enoyl reductase 2 stretch occupies residues 3395–3701 (GTFENLRLEL…QARHTGKVVM (307 aa)). The segment at 3710–3888 (GTVLITGGTG…AISLGWGLWD (179 aa)) is beta-ketoacyl reductase 2. The active-site For beta-ketoacyl reductase 2 activity is Y3858. In terms of domain architecture, Carrier 2 spans 3995 to 4070 (AVLLDLVRSH…ALAGYMRREL (76 aa)). Residue S4030 is modified to O-(pantetheine 4'-phosphoryl)serine.

In terms of assembly, forms a large supramolecular assembly mediated through specific interactions between the N- and C-terminus linkers.

The enzyme catalyses a medium-chain fatty acyl-CoA + 5 (S)-methylmalonyl-CoA + 5 malonyl-CoA + 22 NADPH + 32 H(+) = a mycoketide-CoA + 10 CO2 + 22 NADP(+) + 10 CoA + 11 H2O. It functions in the pathway lipid metabolism; fatty acid metabolism. In terms of biological role, involved in the synthesis of beta-D-mannosyl phosphomycoketide (MPM), an antigenic mycobacterial polyketide. Binds a fatty acyl-CoA as a starter unit, and extends it by five rounds of alternative additions of malonyl-CoA and methylmalonyl-CoA extender units. Depending on the starter unit, the enzyme forms mycoketide-CoAs of different lengths. Shows preference for small-/medium-chain starter fatty acyl substrates. Uses a hybrid modularly iterative mechanism, by forming a supramolecular assembly to perform repetitive cycles of iterations. This chain is Mycoketide-CoA synthase, found in Mycobacterium tuberculosis (strain ATCC 25618 / H37Rv).